Reading from the N-terminus, the 212-residue chain is Translation initiation factor IF-3 (212 aa).

Basic and acidic residues predominate over residues 190-203; the sequence is LVDKNSDSQDKSVS. The tract at residues 190 to 212 is disordered; sequence LVDKNSDSQDKSVSEEDTNEGEQ.

This sequence belongs to the IF-3 family. As to quaternary structure, monomer.

It localises to the cytoplasm. In terms of biological role, IF-3 binds to the 30S ribosomal subunit and shifts the equilibrium between 70S ribosomes and their 50S and 30S subunits in favor of the free subunits, thus enhancing the availability of 30S subunits on which protein synthesis initiation begins. This is Translation initiation factor IF-3 from Mycoplasmopsis fermentans (Mycoplasma fermentans).